The chain runs to 154 residues: Xanthine-guanine phosphoribosyltransferase (154 aa).

5-phospho-alpha-D-ribose 1-diphosphate contacts are provided by residues 37 to 38 (RG), R69, and 88 to 96 (EDLVDSGDT). Residue R69 coordinates GMP. D89 provides a ligand contact to Mg(2+). D92 and I135 together coordinate guanine. 2 residues coordinate xanthine: D92 and I135. GMP-binding positions include 92 to 96 (DSGDT) and 134 to 135 (WI).

The protein belongs to the purine/pyrimidine phosphoribosyltransferase family. XGPT subfamily. Homotetramer. Requires Mg(2+) as cofactor.

The protein localises to the cell inner membrane. It catalyses the reaction GMP + diphosphate = guanine + 5-phospho-alpha-D-ribose 1-diphosphate. The enzyme catalyses XMP + diphosphate = xanthine + 5-phospho-alpha-D-ribose 1-diphosphate. The catalysed reaction is IMP + diphosphate = hypoxanthine + 5-phospho-alpha-D-ribose 1-diphosphate. It participates in purine metabolism; GMP biosynthesis via salvage pathway; GMP from guanine: step 1/1. Its pathway is purine metabolism; XMP biosynthesis via salvage pathway; XMP from xanthine: step 1/1. Its function is as follows. Purine salvage pathway enzyme that catalyzes the transfer of the ribosyl-5-phosphate group from 5-phospho-alpha-D-ribose 1-diphosphate (PRPP) to the N9 position of the 6-oxopurines guanine and xanthine to form the corresponding ribonucleotides GMP (guanosine 5'-monophosphate) and XMP (xanthosine 5'-monophosphate), with the release of PPi. To a lesser extent, also acts on hypoxanthine. This chain is Xanthine-guanine phosphoribosyltransferase, found in Vibrio vulnificus (strain CMCP6).